A 215-amino-acid chain; its full sequence is Large ribosomal subunit protein uL1 (215 aa).

It belongs to the universal ribosomal protein uL1 family. In terms of assembly, part of the 50S ribosomal subunit.

Binds directly to 23S rRNA. Probably involved in E site tRNA release. In terms of biological role, protein L1 is also a translational repressor protein, it controls the translation of its operon by binding to its mRNA. The protein is Large ribosomal subunit protein uL1 of Cenarchaeum symbiosum (strain A).